We begin with the raw amino-acid sequence, 204 residues long: NADH-quinone oxidoreductase subunit C (204 aa).

This sequence belongs to the complex I 30 kDa subunit family. NDH-1 is composed of 14 different subunits. Subunits NuoB, C, D, E, F, and G constitute the peripheral sector of the complex.

It localises to the cell inner membrane. It catalyses the reaction a quinone + NADH + 5 H(+)(in) = a quinol + NAD(+) + 4 H(+)(out). NDH-1 shuttles electrons from NADH, via FMN and iron-sulfur (Fe-S) centers, to quinones in the respiratory chain. The immediate electron acceptor for the enzyme in this species is believed to be ubiquinone. Couples the redox reaction to proton translocation (for every two electrons transferred, four hydrogen ions are translocated across the cytoplasmic membrane), and thus conserves the redox energy in a proton gradient. The sequence is that of NADH-quinone oxidoreductase subunit C from Rhodopseudomonas palustris (strain ATCC BAA-98 / CGA009).